The chain runs to 997 residues: Translation initiation factor IF-2 (997 aa).

Residues 36 to 415 (SMAGSLTTEE…ATQPLKAAKR (380 aa)) are disordered. Composition is skewed to basic and acidic residues over residues 45-65 (EAAR…ERSG) and 94-107 (AREE…EKPA). Residues 108 to 126 (AVEAPAQAEPVAEAPAASP) are compositionally biased toward low complexity. The span at 127–147 (HKVEEKAAPEAAKAEPAEKAK) shows a compositional bias: basic and acidic residues. Over residues 151–162 (ARVVSAARVISR) the composition is skewed to low complexity. The span at 163–181 (PGEEEEKKPEPVVESKPEP) shows a compositional bias: basic and acidic residues. Residues 182-196 (VAEISPVAAALAARE) are compositionally biased toward low complexity. Basic and acidic residues-rich tracts occupy residues 197-214 (AAAR…EKGA) and 241-252 (PEARTEAWKDAD). Gly residues predominate over residues 300 to 309 (GRPGAPGGPR). Positions 316 to 335 (PPRPGGPRPSGPGGPRPAGG) are enriched in pro residues. Basic and acidic residues predominate over residues 378–388 (GGRRDDDDSQR). Over residues 390–399 (NRGKGRRKGG) the composition is skewed to basic residues. The tr-type G domain occupies 496–665 (PRPPVVTIMG…ALQSEIMELK (170 aa)). A G1 region spans residues 505-512 (GHVDHGKT). Residue 505–512 (GHVDHGKT) coordinates GTP. The G2 stretch occupies residues 530–534 (GITQH). The G3 stretch occupies residues 551 to 554 (DTPG). GTP contacts are provided by residues 551-555 (DTPGH) and 605-608 (NKMD). The interval 605–608 (NKMD) is G4. The G5 stretch occupies residues 641–643 (AAK).

This sequence belongs to the TRAFAC class translation factor GTPase superfamily. Classic translation factor GTPase family. IF-2 subfamily.

Its subcellular location is the cytoplasm. One of the essential components for the initiation of protein synthesis. Protects formylmethionyl-tRNA from spontaneous hydrolysis and promotes its binding to the 30S ribosomal subunits. Also involved in the hydrolysis of GTP during the formation of the 70S ribosomal complex. The chain is Translation initiation factor IF-2 from Desulfovibrio desulfuricans (strain ATCC 27774 / DSM 6949 / MB).